A 363-amino-acid polypeptide reads, in one-letter code: Phospho-N-acetylmuramoyl-pentapeptide-transferase (363 aa).

10 consecutive transmembrane segments (helical) span residues glutamine 3 to isoleucine 23, glycine 48 to alanine 68, proline 83 to leucine 103, alanine 121 to alanine 141, phenylalanine 159 to methionine 179, leucine 192 to phenylalanine 212, proline 234 to tryptophan 254, isoleucine 261 to cysteine 281, leucine 286 to valine 306, and phenylalanine 340 to alanine 360.

Belongs to the glycosyltransferase 4 family. MraY subfamily. Requires Mg(2+) as cofactor.

The protein localises to the cell membrane. The catalysed reaction is UDP-N-acetyl-alpha-D-muramoyl-L-alanyl-gamma-D-glutamyl-meso-2,6-diaminopimeloyl-D-alanyl-D-alanine + di-trans,octa-cis-undecaprenyl phosphate = di-trans,octa-cis-undecaprenyl diphospho-N-acetyl-alpha-D-muramoyl-L-alanyl-D-glutamyl-meso-2,6-diaminopimeloyl-D-alanyl-D-alanine + UMP. The protein operates within cell wall biogenesis; peptidoglycan biosynthesis. In terms of biological role, catalyzes the initial step of the lipid cycle reactions in the biosynthesis of the cell wall peptidoglycan: transfers peptidoglycan precursor phospho-MurNAc-pentapeptide from UDP-MurNAc-pentapeptide onto the lipid carrier undecaprenyl phosphate, yielding undecaprenyl-pyrophosphoryl-MurNAc-pentapeptide, known as lipid I. This chain is Phospho-N-acetylmuramoyl-pentapeptide-transferase, found in Streptomyces coelicolor (strain ATCC BAA-471 / A3(2) / M145).